A 140-amino-acid chain; its full sequence is Regulator of ribonuclease activity B (140 aa).

Positions 115–140 (FEDPNAQDDDEDDGEAIDEDDNGIRH) are disordered. Residues 119-140 (NAQDDDEDDGEAIDEDDNGIRH) show a composition bias toward acidic residues.

This sequence belongs to the RraB family. In terms of assembly, interacts with the C-terminal region of Rne.

It is found in the cytoplasm. In terms of biological role, globally modulates RNA abundance by binding to RNase E (Rne) and regulating its endonucleolytic activity. Can modulate Rne action in a substrate-dependent manner by altering the composition of the degradosome. This is Regulator of ribonuclease activity B from Pantoea ananatis (strain LMG 20103).